The primary structure comprises 199 residues: Chaperone protein TorD (199 aa).

The protein belongs to the TorD/DmsD family. TorD subfamily.

The protein resides in the cytoplasm. Involved in the biogenesis of TorA. Acts on TorA before the insertion of the molybdenum cofactor and, as a result, probably favors a conformation of the apoenzyme that is competent for acquiring the cofactor. The polypeptide is Chaperone protein TorD (Shigella dysenteriae serotype 1 (strain Sd197)).